Reading from the N-terminus, the 90-residue chain is Putative septation protein SpoVG (90 aa).

Belongs to the SpoVG family.

Its function is as follows. Could be involved in septation. The sequence is that of Putative septation protein SpoVG from Clostridium perfringens (strain ATCC 13124 / DSM 756 / JCM 1290 / NCIMB 6125 / NCTC 8237 / Type A).